The following is a 546-amino-acid chain: Histidine--tRNA ligase, mitochondrial (546 aa).

The N-terminal 20 residues, 1-20 (MLSRSLNKVVTSIKSSSIIR), are a transit peptide targeting the mitochondrion. L-histidine-binding positions include 129–131 (DLT), R156, Q172, D176, R326, and 330–331 (YY).

This sequence belongs to the class-II aminoacyl-tRNA synthetase family.

It localises to the cytoplasm. The protein localises to the mitochondrion. The enzyme catalyses tRNA(His) + L-histidine + ATP = L-histidyl-tRNA(His) + AMP + diphosphate + H(+). Catalyzes the aminoacylation of histidyl-tRNA in both the cytoplasm and the mitochondrion. The chain is Histidine--tRNA ligase, mitochondrial (HTS1) from Saccharomyces cerevisiae (strain ATCC 204508 / S288c) (Baker's yeast).